The chain runs to 172 residues: Crossover junction endodeoxyribonuclease RuvC (172 aa).

Catalysis depends on residues D11, E71, and D143. Residues D11, E71, and D143 each coordinate Mg(2+).

It belongs to the RuvC family. In terms of assembly, homodimer which binds Holliday junction (HJ) DNA. The HJ becomes 2-fold symmetrical on binding to RuvC with unstacked arms; it has a different conformation from HJ DNA in complex with RuvA. In the full resolvosome a probable DNA-RuvA(4)-RuvB(12)-RuvC(2) complex forms which resolves the HJ. Mg(2+) serves as cofactor.

Its subcellular location is the cytoplasm. The enzyme catalyses Endonucleolytic cleavage at a junction such as a reciprocal single-stranded crossover between two homologous DNA duplexes (Holliday junction).. The RuvA-RuvB-RuvC complex processes Holliday junction (HJ) DNA during genetic recombination and DNA repair. Endonuclease that resolves HJ intermediates. Cleaves cruciform DNA by making single-stranded nicks across the HJ at symmetrical positions within the homologous arms, yielding a 5'-phosphate and a 3'-hydroxyl group; requires a central core of homology in the junction. The consensus cleavage sequence is 5'-(A/T)TT(C/G)-3'. Cleavage occurs on the 3'-side of the TT dinucleotide at the point of strand exchange. HJ branch migration catalyzed by RuvA-RuvB allows RuvC to scan DNA until it finds its consensus sequence, where it cleaves and resolves the cruciform DNA. This Brucella anthropi (strain ATCC 49188 / DSM 6882 / CCUG 24695 / JCM 21032 / LMG 3331 / NBRC 15819 / NCTC 12168 / Alc 37) (Ochrobactrum anthropi) protein is Crossover junction endodeoxyribonuclease RuvC.